The sequence spans 434 residues: Beta-enolase (434 aa).

Alanine 2 carries the post-translational modification N-acetylalanine. A Phosphothreonine modification is found at threonine 72. Phosphoserine occurs at positions 83 and 157. Residues histidine 158 and glutamate 167 each contribute to the substrate site. A Phosphoserine modification is found at serine 176. Threonine 205 carries the phosphothreonine modification. Glutamate 210 acts as the Proton donor in catalysis. A Phosphothreonine modification is found at threonine 229. At tyrosine 236 the chain carries Phosphotyrosine. Position 245 (aspartate 245) interacts with Mg(2+). Serine 263 is subject to Phosphoserine. The substrate site is built by glutamate 293 and aspartate 318. Mg(2+)-binding residues include glutamate 293 and aspartate 318. The active-site Proton acceptor is the lysine 343. Substrate-binding positions include 370–373 (SHRS) and lysine 394.

This sequence belongs to the enolase family. Mammalian enolase is composed of 3 isozyme subunits, alpha, beta and gamma, which can form homodimers or heterodimers which are cell-type and development-specific. Interacts with PNKD. The cofactor is Mg(2+). The alpha/alpha homodimer is expressed in embryo and in most adult tissues. The alpha/beta heterodimer and the beta/beta homodimer are found in striated muscle, and the alpha/gamma heterodimer and the gamma/gamma homodimer in neurons.

It is found in the cytoplasm. The catalysed reaction is (2R)-2-phosphoglycerate = phosphoenolpyruvate + H2O. The protein operates within carbohydrate degradation; glycolysis; pyruvate from D-glyceraldehyde 3-phosphate: step 4/5. Glycolytic enzyme that catalyzes the conversion of 2-phosphoglycerate to phosphoenolpyruvate. Appears to have a function in striated muscle development and regeneration. The polypeptide is Beta-enolase (ENO3) (Homo sapiens (Human)).